A 222-amino-acid polypeptide reads, in one-letter code: WAP four-disulfide core domain protein 1 (222 aa).

Residues 1-32 form the signal peptide; sequence MDSRMLSDQRFCRRIFAAALCVLVLLADSGCA. The WAP domain occupies 61 to 110; sequence HYQKNDRCPPPPQTLPDRACEVPSCRSDSECERHKRCCYNGCIYACLESV. 4 disulfides stabilise this stretch: cysteine 68–cysteine 98, cysteine 80–cysteine 102, cysteine 85–cysteine 97, and cysteine 91–cysteine 106.

It is found in the secreted. Its function is as follows. Has growth inhibitory activity. This is WAP four-disulfide core domain protein 1 (WFDC1) from Gallus gallus (Chicken).